The primary structure comprises 621 residues: Cryptochrome-1 (621 aa).

The Photolyase/cryptochrome alpha/beta domain maps to 3–132 (VNAVHWFRKG…EVIVRISHTL (130 aa)). 3 consecutive short sequence motifs (LIR) follow at residues 50–54 (NRWRF), 82–87 (DVFPRL), and 151–156 (KRFQTL). Position 252 (Ser252) interacts with FAD. 4 short sequence motifs (LIR) span residues 255–260 (LRFGCL), 271–276 (DLYKKV), 285–290 (SLYGQL), and 335–339 (TGFPW). Gln289 contributes to the FAD binding site. His355 is a binding site for FAD. Residues 379 to 384 (KVFEEL) carry the LIR 8 motif. Position 387 to 389 (387 to 389 (DAD)) interacts with FAD. 5 short sequence motifs (LIR) span residues 395–400 (GSWMWL), 411–416 (HCYCPV), 430–435 (RRYLPV), 486–491 (QIYQQL), and 492–497 (SRYRGL). The tract at residues 581 to 621 (QSHLMQPGRASLGTGISAGKRPNPEEETQSVGPKVQRQSTN) is disordered.

The protein belongs to the DNA photolyase class-1 family. As to quaternary structure, component of the circadian core oscillator, which includes the CRY proteins, CLOCK or NPAS2, BMAL1 or BMAL2, CSNK1E, and the PER proteins. FAD serves as cofactor. Requires (6R)-5,10-methylene-5,6,7,8-tetrahydrofolate as cofactor. As to expression, expressed in the pineal gland.

The protein localises to the cytoplasm. Its subcellular location is the nucleus. In terms of biological role, transcriptional repressor which forms a core component of the circadian clock. The circadian clock, an internal time-keeping system, regulates various physiological processes through the generation of approximately 24 hour circadian rhythms in gene expression, which are translated into rhythms in metabolism and behavior. It is derived from the Latin roots 'circa' (about) and 'diem' (day) and acts as an important regulator of a wide array of physiological functions including metabolism, sleep, body temperature, blood pressure, endocrine, immune, cardiovascular, and renal function. Consists of two major components: the central clock, residing in the suprachiasmatic nucleus (SCN) of the brain, and the peripheral clocks that are present in nearly every tissue and organ system. Both the central and peripheral clocks can be reset by environmental cues, also known as Zeitgebers (German for 'timegivers'). The predominant Zeitgeber for the central clock is light, which is sensed by retina and signals directly to the SCN. The central clock entrains the peripheral clocks through neuronal and hormonal signals, body temperature and feeding-related cues, aligning all clocks with the external light/dark cycle. Circadian rhythms allow an organism to achieve temporal homeostasis with its environment at the molecular level by regulating gene expression to create a peak of protein expression once every 24 hours to control when a particular physiological process is most active with respect to the solar day. Transcription and translation of core clock components (CLOCK, NPAS2, BMAL1, BMAL2, PER1, PER2, PER3, CRY1 and CRY2) plays a critical role in rhythm generation, whereas delays imposed by post-translational modifications (PTMs) are important for determining the period (tau) of the rhythms (tau refers to the period of a rhythm and is the length, in time, of one complete cycle). A diurnal rhythm is synchronized with the day/night cycle, while the ultradian and infradian rhythms have a period shorter and longer than 24 hours, respectively. Disruptions in the circadian rhythms contribute to the pathology of cardiovascular diseases, cancer, metabolic syndromes and aging. A transcription/translation feedback loop (TTFL) forms the core of the molecular circadian clock mechanism. Transcription factors, CLOCK or NPAS2 and BMAL1 or BMAL2, form the positive limb of the feedback loop, act in the form of a heterodimer and activate the transcription of core clock genes and clock-controlled genes (involved in key metabolic processes), harboring E-box elements (5'-CACGTG-3') within their promoters. The core clock genes: PER1/2/3 and CRY1/2 which are transcriptional repressors form the negative limb of the feedback loop and interact with the CLOCK|NPAS2-BMAL1|BMAL2 heterodimer inhibiting its activity and thereby negatively regulating their own expression. This heterodimer also activates nuclear receptors NR1D1/2 and RORA/B/G, which form a second feedback loop and which activate and repress BMAL1 transcription, respectively. CRY1 and CRY2 have redundant functions but also differential and selective contributions at least in defining the pace of the SCN circadian clock and its circadian transcriptional outputs. More potent transcriptional repressor in cerebellum and liver than CRY2, though more effective in lengthening the period of the SCN oscillator. On its side, CRY2 seems to play a critical role in tuning SCN circadian period by opposing the action of CRY1. With CRY2, is dispensable for circadian rhythm generation but necessary for the development of intercellular networks for rhythm synchrony. Capable of translocating circadian clock core proteins such as PER proteins to the nucleus. Interacts with CLOCK-BMAL1 independently of PER proteins and is found at CLOCK-BMAL1-bound sites, suggesting that CRY may act as a molecular gatekeeper to maintain CLOCK-BMAL1 in a poised and repressed state until the proper time for transcriptional activation. Represses CLOCK-BMAL1-mediated transcriptional activation. This chain is Cryptochrome-1 (CRY1), found in Gallus gallus (Chicken).